The following is a 232-amino-acid chain: Biosynthetic peptidoglycan transglycosylase (232 aa).

A helical transmembrane segment spans residues 12-31 (YLLWFMAASVVLVAVLRWVP).

The protein belongs to the glycosyltransferase 51 family.

It is found in the cell inner membrane. It catalyses the reaction [GlcNAc-(1-&gt;4)-Mur2Ac(oyl-L-Ala-gamma-D-Glu-L-Lys-D-Ala-D-Ala)](n)-di-trans,octa-cis-undecaprenyl diphosphate + beta-D-GlcNAc-(1-&gt;4)-Mur2Ac(oyl-L-Ala-gamma-D-Glu-L-Lys-D-Ala-D-Ala)-di-trans,octa-cis-undecaprenyl diphosphate = [GlcNAc-(1-&gt;4)-Mur2Ac(oyl-L-Ala-gamma-D-Glu-L-Lys-D-Ala-D-Ala)](n+1)-di-trans,octa-cis-undecaprenyl diphosphate + di-trans,octa-cis-undecaprenyl diphosphate + H(+). The protein operates within cell wall biogenesis; peptidoglycan biosynthesis. Peptidoglycan polymerase that catalyzes glycan chain elongation from lipid-linked precursors. The sequence is that of Biosynthetic peptidoglycan transglycosylase from Pseudomonas aeruginosa (strain ATCC 15692 / DSM 22644 / CIP 104116 / JCM 14847 / LMG 12228 / 1C / PRS 101 / PAO1).